Consider the following 80-residue polypeptide: Putative membrane protein insertion efficiency factor (80 aa).

Belongs to the UPF0161 family.

The protein localises to the cell inner membrane. Could be involved in insertion of integral membrane proteins into the membrane. The sequence is that of Putative membrane protein insertion efficiency factor from Paracoccus denitrificans (strain Pd 1222).